The sequence spans 336 residues: Lipoyl synthase (336 aa).

Residues Cys-81, Cys-86, Cys-92, Cys-107, Cys-111, Cys-114, and Ser-323 each coordinate [4Fe-4S] cluster. The Radical SAM core domain occupies 93 to 312; that stretch reads FGHGTATFMI…EDYGYELGFS (220 aa).

It belongs to the radical SAM superfamily. Lipoyl synthase family. [4Fe-4S] cluster is required as a cofactor.

The protein localises to the cytoplasm. It carries out the reaction [[Fe-S] cluster scaffold protein carrying a second [4Fe-4S](2+) cluster] + N(6)-octanoyl-L-lysyl-[protein] + 2 oxidized [2Fe-2S]-[ferredoxin] + 2 S-adenosyl-L-methionine + 4 H(+) = [[Fe-S] cluster scaffold protein] + N(6)-[(R)-dihydrolipoyl]-L-lysyl-[protein] + 4 Fe(3+) + 2 hydrogen sulfide + 2 5'-deoxyadenosine + 2 L-methionine + 2 reduced [2Fe-2S]-[ferredoxin]. The protein operates within protein modification; protein lipoylation via endogenous pathway; protein N(6)-(lipoyl)lysine from octanoyl-[acyl-carrier-protein]: step 2/2. Its function is as follows. Catalyzes the radical-mediated insertion of two sulfur atoms into the C-6 and C-8 positions of the octanoyl moiety bound to the lipoyl domains of lipoate-dependent enzymes, thereby converting the octanoylated domains into lipoylated derivatives. This is Lipoyl synthase from Stenotrophomonas maltophilia (strain K279a).